Consider the following 387-residue polypeptide: Acyl-[acyl-carrier-protein] 6-desaturase (387 aa).

The N-terminal 29 residues, 1-29, are a transit peptide targeting the chloroplast; that stretch reads MALVFKSIGAHKTPPCTLNLASPALYHTR. Glu-131, Glu-169, His-172, Glu-222, Glu-255, and His-258 together coordinate Fe cation.

Belongs to the fatty acid desaturase type 2 family. Fe(2+) is required as a cofactor.

The protein resides in the plastid. The protein localises to the chloroplast. The catalysed reaction is hexadecanoyl-[ACP] + 2 reduced [2Fe-2S]-[ferredoxin] + O2 + 2 H(+) = (6Z)-hexadecenoyl-[ACP] + 2 oxidized [2Fe-2S]-[ferredoxin] + 2 H2O. It functions in the pathway lipid metabolism; fatty acid metabolism. With respect to regulation, inhibited by KCN or H(2)O(2). Delta(6) fatty acid desaturase introducing a cis double bond at carbon 6 of palmitoyl-[acyl-carrier protein](16:0-ACP), producing 16:1(6Z)-ACP. No activity with the coenzyme A ester of the fatty acid. The position of the double bond is determined by its distance from the carboxyl end of the fatty acid. Low activity with several saturated acyl-[acyl-carrier protein]s, including 14:0-ACP and 18:0-ACP. Requires reduced ferredoxin for detectable in vitro activity. The protein is Acyl-[acyl-carrier-protein] 6-desaturase of Thunbergia alata (Black-eyed Susan vine).